Consider the following 464-residue polypeptide: Kynureninase (464 aa).

N-acetylmethionine is present on M1. Pyridoxal 5'-phosphate contacts are provided by residues L137, T138, 165 to 168 (FPSD), S221, D250, H253, and Y275. The residue at position 276 (K276) is an N6-(pyridoxal phosphate)lysine. Residues W305 and N333 each contribute to the pyridoxal 5'-phosphate site.

This sequence belongs to the kynureninase family. Homodimer. Requires pyridoxal 5'-phosphate as cofactor. High levels in liver and kidney. Also detected in heart, retina, ovary. Lung, testis and brain.

The protein localises to the cytoplasm. Its subcellular location is the cytosol. It carries out the reaction L-kynurenine + H2O = anthranilate + L-alanine + H(+). The catalysed reaction is 3-hydroxy-L-kynurenine + H2O = 3-hydroxyanthranilate + L-alanine + H(+). It participates in amino-acid degradation; L-kynurenine degradation; L-alanine and anthranilate from L-kynurenine: step 1/1. The protein operates within cofactor biosynthesis; NAD(+) biosynthesis; quinolinate from L-kynurenine: step 2/3. With respect to regulation, inhibited by o-methylbenzoylalanine (OMBA). Catalyzes the cleavage of L-kynurenine (L-Kyn) and L-3-hydroxykynurenine (L-3OHKyn) into anthranilic acid (AA) and 3-hydroxyanthranilic acid (3-OHAA), respectively. Has a preference for the L-3-hydroxy form. Also has cysteine-conjugate-beta-lyase activity. The protein is Kynureninase (Kynu) of Rattus norvegicus (Rat).